The sequence spans 86 residues: Large ribosomal subunit protein uL23 (86 aa).

This sequence belongs to the universal ribosomal protein uL23 family. As to quaternary structure, part of the 50S ribosomal subunit. Contacts protein L29.

Its function is as follows. Binds to 23S rRNA. One of the proteins that surrounds the polypeptide exit tunnel on the outside of the ribosome. This Methanococcus maripaludis (strain C7 / ATCC BAA-1331) protein is Large ribosomal subunit protein uL23.